A 111-amino-acid polypeptide reads, in one-letter code: Kalata-B7 (111 aa).

Residues 1-28 (MAKFTNCLALCLLLAAVVGAFGVELSEA) form the signal peptide. A propeptide spanning residues 29 to 75 (DKSAVVNEIAEKMALQEMLDGVDKLFLRKMKSSETTLTMFLKEMQLK) is cleaved from the precursor. Positions 76–104 (GLPVCGETCTLGTCYTQGCTCSWPICKRN) form a cross-link, cyclopeptide (Gly-Asn). Disulfide bonds link C80–C94, C84–C96, and C89–C101. Residues 105 to 111 (GLPDVAA) constitute a propeptide that is removed on maturation.

Post-translationally, kalata-B7 is a cyclic peptide.

In terms of biological role, probably participates in a plant defense mechanism. Has hemolytic activity. The polypeptide is Kalata-B7 (OAK3) (Oldenlandia affinis).